We begin with the raw amino-acid sequence, 378 residues long: MLIEECPIIGVNVRVWLFWSYLRRPRLSRFLVGCIPVAVLNVFQFLKLYSSWGDMSELIINGYFTVLYFNLVLRTSFLVINRRKFETFFEGVAAEYALLEKNDDIRPVLERYTRRGRMLSISNLWLGAFISACFVTYPLFVPGRGLPYGVTIPGVDVLATPTYQVVFVLQVYLTFPACCMYIPFTSFYATCTLFALVQIAALKQRLGRLGRHSGTMASTGHSAGTLFAELKECLKYHKQIIQYVHDLNSLVTHLCLLEFLSFGMMLCALLFLLSISNQLAQMIMIGSYIFMILSQMFAFYWHANEVLEQSLGIGDAIYNGAWPDFEEPIRKRLILIIARAQRPMVIKVGNVYPMTLEMFQKLLNVSYSYFTLLRRVYN.

Residue M1 is a topological domain, cytoplasmic. A helical membrane pass occupies residues 2-22 (LIEECPIIGVNVRVWLFWSYL). The Extracellular segment spans residues 23–29 (RRPRLSR). A helical membrane pass occupies residues 30–50 (FLVGCIPVAVLNVFQFLKLYS). Topologically, residues 51-59 (SWGDMSELI) are cytoplasmic. The chain crosses the membrane as a helical span at residues 60-80 (INGYFTVLYFNLVLRTSFLVI). Over 81-120 (NRRKFETFFEGVAAEYALLEKNDDIRPVLERYTRRGRMLS) the chain is Extracellular. A helical membrane pass occupies residues 121 to 141 (ISNLWLGAFISACFVTYPLFV). Topologically, residues 142–164 (PGRGLPYGVTIPGVDVLATPTYQ) are cytoplasmic. Residues 165–185 (VVFVLQVYLTFPACCMYIPFT) traverse the membrane as a helical segment. Over 186–254 (SFYATCTLFA…HDLNSLVTHL (69 aa)) the chain is Extracellular. Residues 255–275 (CLLEFLSFGMMLCALLFLLSI) form a helical membrane-spanning segment. Residues 276–278 (SNQ) lie on the Cytoplasmic side of the membrane. Residues 279–299 (LAQMIMIGSYIFMILSQMFAF) traverse the membrane as a helical segment. At 300-378 (YWHANEVLEQ…YFTLLRRVYN (79 aa)) the chain is on the extracellular side. Residue N364 is glycosylated (N-linked (GlcNAc...) asparagine).

This sequence belongs to the insect chemoreceptor superfamily. Heteromeric odorant receptor channel (TC 1.A.69) family. Or30a subfamily. As to expression, expressed in male and female antennae and maxillary palps.

Its subcellular location is the cell membrane. In terms of biological role, odorant receptor which plays a critical role in the anthropophilic host-seeking behavior; establishes the host preference to transmit malaria. This chain is Odorant receptor Or2 (OR2), found in Anopheles gambiae (African malaria mosquito).